A 577-amino-acid polypeptide reads, in one-letter code: ER degradation-enhancing alpha-mannosidase-like protein 2 (577 aa).

Positions 1-21 (MPFRLLIPLGLVCVLLPLHHG) are cleaved as a signal peptide. 4 N-linked (GlcNAc...) asparagine glycosylation sites follow: Asn-90, Asn-112, Asn-289, and Asn-450. The segment at 513–561 (PKRAQRKTVRSGPWEPQSGPATLSSPANQPREKQPAQQRTPLLSCPSQP) is disordered. 2 stretches are compositionally biased toward polar residues: residues 531 to 540 (GPATLSSPAN) and 547 to 561 (PAQQ…PSQP).

It belongs to the glycosyl hydrolase 47 family. Post-translationally, N-glycosylated.

It localises to the endoplasmic reticulum lumen. Its function is as follows. Involved in the endoplasmic reticulum-associated degradation (ERAD) pathway that targets misfolded glycoproteins for degradation in an N-glycan-dependent manner. May initiate ERAD by promoting the first mannose trimming step of ERAD substrates, from Man9GlcNAc2 to Man8GlcNAc2. Seems to recognize and bind to exposed hydrophobic regions in target proteins. The polypeptide is ER degradation-enhancing alpha-mannosidase-like protein 2 (Mus musculus (Mouse)).